The primary structure comprises 330 residues: ADP-L-glycero-D-manno-heptose-6-epimerase (330 aa).

NADP(+)-binding positions include 11–12, 32–33, lysine 39, lysine 54, 75–79, and asparagine 92; these read FI, DN, and EGACS. Tyrosine 139 (proton acceptor) is an active-site residue. Lysine 143 contacts NADP(+). Asparagine 168 provides a ligand contact to substrate. NADP(+)-binding residues include valine 169 and lysine 177. Residue lysine 177 is the Proton acceptor of the active site. Residues arginine 179, histidine 186, 200–203, arginine 213, and tyrosine 292 each bind substrate; that span reads FGEY.

It belongs to the NAD(P)-dependent epimerase/dehydratase family. HldD subfamily. In terms of assembly, homopentamer. Requires NADP(+) as cofactor.

The catalysed reaction is ADP-D-glycero-beta-D-manno-heptose = ADP-L-glycero-beta-D-manno-heptose. It participates in nucleotide-sugar biosynthesis; ADP-L-glycero-beta-D-manno-heptose biosynthesis; ADP-L-glycero-beta-D-manno-heptose from D-glycero-beta-D-manno-heptose 7-phosphate: step 4/4. Its function is as follows. Catalyzes the interconversion between ADP-D-glycero-beta-D-manno-heptose and ADP-L-glycero-beta-D-manno-heptose via an epimerization at carbon 6 of the heptose. The polypeptide is ADP-L-glycero-D-manno-heptose-6-epimerase (Burkholderia cenocepacia (strain ATCC BAA-245 / DSM 16553 / LMG 16656 / NCTC 13227 / J2315 / CF5610) (Burkholderia cepacia (strain J2315))).